The following is a 356-amino-acid chain: Histidinol-phosphate aminotransferase (356 aa).

An N6-(pyridoxal phosphate)lysine modification is found at lysine 214.

This sequence belongs to the class-II pyridoxal-phosphate-dependent aminotransferase family. Histidinol-phosphate aminotransferase subfamily. Homodimer. It depends on pyridoxal 5'-phosphate as a cofactor.

The enzyme catalyses L-histidinol phosphate + 2-oxoglutarate = 3-(imidazol-4-yl)-2-oxopropyl phosphate + L-glutamate. It functions in the pathway amino-acid biosynthesis; L-histidine biosynthesis; L-histidine from 5-phospho-alpha-D-ribose 1-diphosphate: step 7/9. In Escherichia coli O8 (strain IAI1), this protein is Histidinol-phosphate aminotransferase.